A 320-amino-acid chain; its full sequence is ATP-dependent 6-phosphofructokinase (320 aa).

Gly11 lines the ATP pocket. 21–25 is a binding site for ADP; the sequence is RAVTK. ATP contacts are provided by residues 72-73 and 102-105; these read RF and GDGS. Asp103 serves as a coordination point for Mg(2+). Substrate is bound at residue 125–127; that stretch reads TID. The Proton acceptor role is filled by Asp127. Arg154 lines the ADP pocket. Residues Arg162 and 169-171 each bind substrate; that span reads MGR. ADP is bound by residues 185–187 and 213–215; these read GAD and KDH. Substrate contacts are provided by residues Glu222, Arg243, and 249–252; that span reads HMQR.

This sequence belongs to the phosphofructokinase type A (PFKA) family. ATP-dependent PFK group I subfamily. Prokaryotic clade 'B1' sub-subfamily. As to quaternary structure, homotetramer. It depends on Mg(2+) as a cofactor.

It localises to the cytoplasm. It catalyses the reaction beta-D-fructose 6-phosphate + ATP = beta-D-fructose 1,6-bisphosphate + ADP + H(+). It participates in carbohydrate degradation; glycolysis; D-glyceraldehyde 3-phosphate and glycerone phosphate from D-glucose: step 3/4. Allosterically activated by ADP and other diphosphonucleosides, and allosterically inhibited by phosphoenolpyruvate. Functionally, catalyzes the phosphorylation of D-fructose 6-phosphate to fructose 1,6-bisphosphate by ATP, the first committing step of glycolysis. This Lactobacillus helveticus (strain DPC 4571) protein is ATP-dependent 6-phosphofructokinase.